A 272-amino-acid chain; its full sequence is 2,3,4,5-tetrahydropyridine-2,6-dicarboxylate N-succinyltransferase (272 aa).

The substrate site is built by R104 and D141.

It belongs to the transferase hexapeptide repeat family. As to quaternary structure, homotrimer.

It is found in the cytoplasm. The enzyme catalyses (S)-2,3,4,5-tetrahydrodipicolinate + succinyl-CoA + H2O = (S)-2-succinylamino-6-oxoheptanedioate + CoA. Its pathway is amino-acid biosynthesis; L-lysine biosynthesis via DAP pathway; LL-2,6-diaminopimelate from (S)-tetrahydrodipicolinate (succinylase route): step 1/3. This is 2,3,4,5-tetrahydropyridine-2,6-dicarboxylate N-succinyltransferase from Dechloromonas aromatica (strain RCB).